The sequence spans 317 residues: Taste receptor type 2 member 14 (317 aa).

At 1–7 (MGDVIKS) the chain is on the extracellular side. A helical transmembrane segment spans residues 8-28 (IFTFVLIVEFIIGNLGNSFIA). Residues 29 to 55 (LVNCIDWVKGRKISSVDQILTALAISR) lie on the Cytoplasmic side of the membrane. Residues 56–76 (ISLVWLIFGSWCVSVFLPALF) form a helical membrane-spanning segment. At 77–87 (ATEKMFRMLTN) the chain is on the extracellular side. Cholesterol-binding residues include T86 and W89. The chain crosses the membrane as a helical span at residues 88–108 (IWTVINHFSVWLATGLGTFYF). The Cytoplasmic portion of the chain corresponds to 109 to 129 (LKIANFSNSIFLYLKWRVKKV). A helical membrane pass occupies residues 130 to 150 (VLVLLLVTSVFLFLNIALINI). The Extracellular portion of the chain corresponds to 151-184 (HINASINGYRRNKTCSSDSSNFTRFSSLIVLTST). N-linked (GlcNAc...) asparagine glycosylation is found at N153, N162, and N171. V180 provides a ligand contact to cholesterol. Residues 185-205 (VFIFIPFTLSLAMFLLLIFSL) traverse the membrane as a helical segment. Over 206-232 (WKHRKKMQHXVKRSGDASTKAHRGVKS) the chain is Cytoplasmic. Residues 233–253 (VITFFLLYAIFCLSFFISVWT) traverse the membrane as a helical segment. Residues 254–261 (SERLEENL) are Extracellular-facing. The chain crosses the membrane as a helical span at residues 262–282 (IILSQVMGMAYPSCHSCVLIL). Residues S265 and M268 each contribute to the cholesterol site. The Cytoplasmic portion of the chain corresponds to 283-317 (GNKKLRQASLSVLLWLRYMFKDGEPSGHKEFRESS).

Belongs to the G-protein coupled receptor T2R family. In terms of assembly, core component of the TAS2R14-GNAI1 complex, consisting of TAS2R14, GNAI1, GNB1 and GNG2; within the complex interacts with GNAI1. Core component of the TAS2R14-GNAT3 complex, consisting of TAS2R14, GNAT3, GNB1 and GNG2; within the complex interacts with GNAT3. Core component of the TAS2R14-GNAS2 complex, consisting of TAS2R14, GNAS2, GNB1 and GNG2; within the complex interacts with GNAS2.

It localises to the membrane. The catalysed reaction is Ca(2+)(in) = Ca(2+)(out). It carries out the reaction 3',5'-cyclic AMP(in) = 3',5'-cyclic AMP(out). Its activity is regulated as follows. Basal activity is enhanced by binding to bitter tastants, such as flufenamic acid and aristolochic acid. Regulated by cholesterol in a concentration-dependent manner. Its function is as follows. Gustducin-linked G-protein coupled receptor that plays a role in the perception of bitterness. The activity of this receptor stimulates GNAT3, activating the gustducin G-protein pathway. Likely plays a role in sensing the chemical composition of the gastrointestinal content and other extra-oral tissues via the inhibitory G-protein pathways. In Gorilla gorilla gorilla (Western lowland gorilla), this protein is Taste receptor type 2 member 14 (TAS2R14).